Consider the following 615-residue polypeptide: uncharacterized protein (615 aa).

Aspartate 403 (proton acceptor) is an active-site residue. Glutamate 406 acts as the Proton donor in catalysis.

The protein belongs to the glycosyl hydrolase 15 family.

This is an uncharacterized protein from Methanocaldococcus jannaschii (strain ATCC 43067 / DSM 2661 / JAL-1 / JCM 10045 / NBRC 100440) (Methanococcus jannaschii).